We begin with the raw amino-acid sequence, 383 residues long: Centractin (383 aa).

A disordered region spans residues Pro-227–Pro-246.

The protein belongs to the actin family. ARP1 subfamily.

Its subcellular location is the cytoplasm. The protein resides in the cytoskeleton. It localises to the microtubule organizing center. It is found in the centrosome. In terms of biological role, component of a multi-subunit complex, PPK2 (poly P kinase complex 2) involved in microtubule based vesicle motility. It is associated with the centrosome. PPK2 complex can synthesize a poly chain of hundreds of phosphate residues linked by ATP-like bonds. This is Centractin (arpA) from Dictyostelium discoideum (Social amoeba).